The chain runs to 243 residues: DNA repair protein RecO (243 aa).

The protein belongs to the RecO family.

In terms of biological role, involved in DNA repair and RecF pathway recombination. This Frankia casuarinae (strain DSM 45818 / CECT 9043 / HFP020203 / CcI3) protein is DNA repair protein RecO.